Reading from the N-terminus, the 220-residue chain is Ribonuclease HII (220 aa).

The region spanning 1 to 210 (MKVAGVDEAG…ARKIEERFRK (210 aa)) is the RNase H type-2 domain. D7, E8, and D105 together coordinate a divalent metal cation.

The protein belongs to the RNase HII family. Requires Mn(2+) as cofactor. Mg(2+) is required as a cofactor.

Its subcellular location is the cytoplasm. The catalysed reaction is Endonucleolytic cleavage to 5'-phosphomonoester.. Functionally, endonuclease that specifically degrades the RNA of RNA-DNA hybrids. This Pyrococcus horikoshii (strain ATCC 700860 / DSM 12428 / JCM 9974 / NBRC 100139 / OT-3) protein is Ribonuclease HII (rnhB).